Here is a 228-residue protein sequence, read N- to C-terminus: Ras-related protein Rab-32D (228 aa).

Residue glycine 16 to threonine 23 participates in GTP binding. The short motif at tyrosine 38 to phenylalanine 46 is the Effector region element. GTP contacts are provided by residues aspartate 64 to glutamine 68 and asparagine 128 to aspartate 131. Residues serine 183–lysine 228 are disordered. Positions asparagine 185–threonine 196 are enriched in acidic residues. The segment covering threonine 211–lysine 228 has biased composition (low complexity). A lipid anchor (S-geranylgeranyl cysteine) is attached at cysteine 224.

This sequence belongs to the small GTPase superfamily. Rab family.

The sequence is that of Ras-related protein Rab-32D (rab32D) from Dictyostelium discoideum (Social amoeba).